The primary structure comprises 185 residues: Elongation factor P (185 aa).

This sequence belongs to the elongation factor P family.

Its subcellular location is the cytoplasm. Its pathway is protein biosynthesis; polypeptide chain elongation. Functionally, involved in peptide bond synthesis. Stimulates efficient translation and peptide-bond synthesis on native or reconstituted 70S ribosomes in vitro. Probably functions indirectly by altering the affinity of the ribosome for aminoacyl-tRNA, thus increasing their reactivity as acceptors for peptidyl transferase. The polypeptide is Elongation factor P (Staphylococcus epidermidis (strain ATCC 35984 / DSM 28319 / BCRC 17069 / CCUG 31568 / BM 3577 / RP62A)).